Consider the following 556-residue polypeptide: Oxygen-dependent choline dehydrogenase (556 aa).

Residue 4-33 (DYIIIGAGSAGNVLATRLTEDPNTSVLLLE) coordinates FAD. Residue His-473 is the Proton acceptor of the active site.

Belongs to the GMC oxidoreductase family. The cofactor is FAD.

The catalysed reaction is choline + A = betaine aldehyde + AH2. It catalyses the reaction betaine aldehyde + NAD(+) + H2O = glycine betaine + NADH + 2 H(+). Its pathway is amine and polyamine biosynthesis; betaine biosynthesis via choline pathway; betaine aldehyde from choline (cytochrome c reductase route): step 1/1. Involved in the biosynthesis of the osmoprotectant glycine betaine. Catalyzes the oxidation of choline to betaine aldehyde and betaine aldehyde to glycine betaine at the same rate. This is Oxygen-dependent choline dehydrogenase from Escherichia coli O139:H28 (strain E24377A / ETEC).